We begin with the raw amino-acid sequence, 338 residues long: Ketol-acid reductoisomerase (NADP(+)) (338 aa).

Residues 1 to 181 (MNIYYDKDCD…GGGRAGIIET (181 aa)) enclose the KARI N-terminal Rossmann domain. Residues 24–27 (YGSQ), Arg-47, Ser-50, Ser-52, and 82–85 (DEHQ) contribute to the NADP(+) site. His-107 is a catalytic residue. Gly-133 provides a ligand contact to NADP(+). Positions 182–327 (AFREETETDL…ERLRSMMPWI (146 aa)) constitute a KARI C-terminal knotted domain. Residues Asp-190, Glu-194, Glu-226, and Glu-230 each contribute to the Mg(2+) site. Ser-251 is a binding site for substrate.

It belongs to the ketol-acid reductoisomerase family. Requires Mg(2+) as cofactor.

It catalyses the reaction (2R)-2,3-dihydroxy-3-methylbutanoate + NADP(+) = (2S)-2-acetolactate + NADPH + H(+). The catalysed reaction is (2R,3R)-2,3-dihydroxy-3-methylpentanoate + NADP(+) = (S)-2-ethyl-2-hydroxy-3-oxobutanoate + NADPH + H(+). It functions in the pathway amino-acid biosynthesis; L-isoleucine biosynthesis; L-isoleucine from 2-oxobutanoate: step 2/4. The protein operates within amino-acid biosynthesis; L-valine biosynthesis; L-valine from pyruvate: step 2/4. In terms of biological role, involved in the biosynthesis of branched-chain amino acids (BCAA). Catalyzes an alkyl-migration followed by a ketol-acid reduction of (S)-2-acetolactate (S2AL) to yield (R)-2,3-dihydroxy-isovalerate. In the isomerase reaction, S2AL is rearranged via a Mg-dependent methyl migration to produce 3-hydroxy-3-methyl-2-ketobutyrate (HMKB). In the reductase reaction, this 2-ketoacid undergoes a metal-dependent reduction by NADPH to yield (R)-2,3-dihydroxy-isovalerate. The polypeptide is Ketol-acid reductoisomerase (NADP(+)) (Nitrosococcus oceani (strain ATCC 19707 / BCRC 17464 / JCM 30415 / NCIMB 11848 / C-107)).